Here is a 464-residue protein sequence, read N- to C-terminus: Cell division protein FtsA (464 aa).

The disordered stretch occupies residues 392–464 (EVIESDKDSE…FKKLMKSLFE (73 aa)). Residues 416–455 (KKENDEVAPEAPREESYEDRENHLEDEQQTEGKAKEESKF) are compositionally biased toward basic and acidic residues.

Belongs to the FtsA/MreB family. In terms of assembly, self-interacts. Interacts with FtsZ.

It is found in the cell membrane. In terms of biological role, cell division protein that is involved in the assembly of the Z ring. May serve as a membrane anchor for the Z ring. This chain is Cell division protein FtsA, found in Staphylococcus epidermidis (strain ATCC 35984 / DSM 28319 / BCRC 17069 / CCUG 31568 / BM 3577 / RP62A).